We begin with the raw amino-acid sequence, 268 residues long: UPF0328 protein ECU03_0040 (268 aa).

The protein belongs to the UPF0328 family.

The protein is UPF0328 protein ECU03_0040 of Encephalitozoon cuniculi (strain GB-M1) (Microsporidian parasite).